A 382-amino-acid chain; its full sequence is Queuine tRNA-ribosyltransferase (382 aa).

The active-site Proton acceptor is the aspartate 94. Substrate contacts are provided by residues 94 to 98 (DSGGF), aspartate 148, glutamine 192, and glycine 219. An RNA binding region spans residues 250–256 (GVGKPED). Aspartate 269 serves as the catalytic Nucleophile. An RNA binding; important for wobble base 34 recognition region spans residues 274 to 278 (TRNAR). Residues cysteine 307, cysteine 309, cysteine 312, and histidine 338 each contribute to the Zn(2+) site.

Belongs to the queuine tRNA-ribosyltransferase family. In terms of assembly, homodimer. Within each dimer, one monomer is responsible for RNA recognition and catalysis, while the other monomer binds to the replacement base PreQ1. Requires Zn(2+) as cofactor.

The enzyme catalyses 7-aminomethyl-7-carbaguanine + guanosine(34) in tRNA = 7-aminomethyl-7-carbaguanosine(34) in tRNA + guanine. It functions in the pathway tRNA modification; tRNA-queuosine biosynthesis. Catalyzes the base-exchange of a guanine (G) residue with the queuine precursor 7-aminomethyl-7-deazaguanine (PreQ1) at position 34 (anticodon wobble position) in tRNAs with GU(N) anticodons (tRNA-Asp, -Asn, -His and -Tyr). Catalysis occurs through a double-displacement mechanism. The nucleophile active site attacks the C1' of nucleotide 34 to detach the guanine base from the RNA, forming a covalent enzyme-RNA intermediate. The proton acceptor active site deprotonates the incoming PreQ1, allowing a nucleophilic attack on the C1' of the ribose to form the product. After dissociation, two additional enzymatic reactions on the tRNA convert PreQ1 to queuine (Q), resulting in the hypermodified nucleoside queuosine (7-(((4,5-cis-dihydroxy-2-cyclopenten-1-yl)amino)methyl)-7-deazaguanosine). In Haemophilus ducreyi (strain 35000HP / ATCC 700724), this protein is Queuine tRNA-ribosyltransferase.